A 380-amino-acid polypeptide reads, in one-letter code: DNA primase small subunit PriS (380 aa).

Catalysis depends on residues Asp-101, Asp-103, and Asp-282.

The protein belongs to the eukaryotic-type primase small subunit family. In terms of assembly, heterodimer of a small subunit (PriS) and a large subunit (PriL). Mg(2+) serves as cofactor. The cofactor is Mn(2+).

Catalytic subunit of DNA primase, an RNA polymerase that catalyzes the synthesis of short RNA molecules used as primers for DNA polymerase during DNA replication. The small subunit contains the primase catalytic core and has DNA synthesis activity on its own. Binding to the large subunit stabilizes and modulates the activity, increasing the rate of DNA synthesis while decreasing the length of the DNA fragments, and conferring RNA synthesis capability. The DNA polymerase activity may enable DNA primase to also catalyze primer extension after primer synthesis. May also play a role in DNA repair. The polypeptide is DNA primase small subunit PriS (Hyperthermus butylicus (strain DSM 5456 / JCM 9403 / PLM1-5)).